The sequence spans 419 residues: Chalcone synthase D (419 aa).

Cys164 is a catalytic residue.

This sequence belongs to the thiolase-like superfamily. Chalcone/stilbene synthases family.

It carries out the reaction (E)-4-coumaroyl-CoA + 3 malonyl-CoA + 3 H(+) = 2',4,4',6'-tetrahydroxychalcone + 3 CO2 + 4 CoA. It functions in the pathway secondary metabolite biosynthesis; flavonoid biosynthesis. In terms of biological role, the primary product of this enzyme is 4,2',4',6'-tetrahydroxychalcone (also termed naringenin-chalcone or chalcone) which can under specific conditions spontaneously isomerize into naringenin. This Petunia hybrida (Petunia) protein is Chalcone synthase D (CHSD).